The following is a 327-amino-acid chain: 3' cyclic ADP-D-ribose synthase AaTIR (327 aa).

The segment at 10–120 (VALSFAGENR…GILKTIGYIN (111 aa)) is TIR domain. The active site involves Lys-229.

Homodimer.

The catalysed reaction is NADP(+) + H2O = ADP-D-ribose 2'-phosphate + nicotinamide + H(+). It carries out the reaction NAD(+) = 3'cADPR + nicotinamide + H(+). Its function is as follows. NAD(+) hydrolase (NADase) that generates 3'cADPR, a cyclization variant of cyclic ADP-D-ribose (also called v2-cADPR). Also cleaves NADP(+), but does not cyclize the product. The sequence is that of 3' cyclic ADP-D-ribose synthase AaTIR from Aquimarina amphilecti.